The chain runs to 171 residues: Voltage-dependent P/Q-type calcium channel subunit alpha-1A (171 aa).

A helical transmembrane segment spans residues 1 to 11 (FVTVLGSITDI). One copy of the IV repeat lies at 1 to 171 (FVTVLGSITD…LMLNLFVAVI (171 aa)). Residues 12–18 (LVTEFGN) lie on the Extracellular side of the membrane. The chain crosses the membrane as a helical span at residues 19-37 (NFINLSFLRLFRAARLIKL). At 38-56 (LRQGYTIRILLWTFVQSFK) the chain is on the cytoplasmic side. A helical transmembrane segment spans residues 57 to 76 (ALPYVCLLIAMLFFIYAIIG). Topologically, residues 77-143 (MQVFGNIGIE…ENSGIKEDEC (67 aa)) are extracellular. Residues 144–168 (GNEFAYFYFVSFIFLCSFLMLNLFV) form a helical membrane-spanning segment. Residues 169–171 (AVI) are Cytoplasmic-facing.

Belongs to the calcium channel alpha-1 subunit (TC 1.A.1.11) family. CACNA1A subfamily. In terms of assembly, voltage-dependent calcium channels are multisubunit complexes, consisting of alpha-1, alpha-2, beta and delta subunits in a 1:1:1:1 ratio. The channel activity is directed by the pore-forming and voltage-sensitive alpha-1 subunit. In many cases, this subunit is sufficient to generate voltage-sensitive calcium channel activity. The auxiliary subunits beta and alpha-2/delta linked by a disulfide bridge regulate the channel activity.

The protein resides in the cell membrane. The enzyme catalyses Ca(2+)(in) = Ca(2+)(out). In terms of biological role, the isoform alpha-1A gives rise to P and/or Q-type calcium currents. P/Q-type calcium channels belong to the 'high-voltage activated' (HVA) group. The sequence is that of Voltage-dependent P/Q-type calcium channel subunit alpha-1A (CACNA1A) from Gallus gallus (Chicken).